We begin with the raw amino-acid sequence, 599 residues long: Elongation factor 4 (599 aa).

Residues lysine 2 to glutamate 184 form the tr-type G domain. GTP-binding positions include aspartate 14–threonine 19 and asparagine 131–aspartate 134.

The protein belongs to the TRAFAC class translation factor GTPase superfamily. Classic translation factor GTPase family. LepA subfamily.

It is found in the cell inner membrane. The catalysed reaction is GTP + H2O = GDP + phosphate + H(+). Its function is as follows. Required for accurate and efficient protein synthesis under certain stress conditions. May act as a fidelity factor of the translation reaction, by catalyzing a one-codon backward translocation of tRNAs on improperly translocated ribosomes. Back-translocation proceeds from a post-translocation (POST) complex to a pre-translocation (PRE) complex, thus giving elongation factor G a second chance to translocate the tRNAs correctly. Binds to ribosomes in a GTP-dependent manner. This is Elongation factor 4 from Escherichia coli (strain UTI89 / UPEC).